The chain runs to 586 residues: Axin-like protein pry-1 (586 aa).

Residues 1–135 (METHLGWARS…FIEAFNKMSS (135 aa)) are required for interaction with apr-1. The RGS domain occupies 10-131 (SLEAVLSDRS…GSEEFIEAFN (122 aa)). 3 disordered regions span residues 137–168 (TADQ…KSAA), 344–442 (MTDD…DSFA), and 478–501 (TSSL…HSKI). Polar residues-rich tracts occupy residues 151–168 (HQNT…KSAA) and 368–388 (GEGS…QLHN). The segment covering 421-442 (SQSMCAPSYSSASSSYSRDSFA) has biased composition (low complexity). Residues 486–501 (RRQHRKAPTPKKHSKI) are compositionally biased toward basic residues. One can recognise a DIX domain in the interval 505-586 (LSNLITISYL…FEGRIAAELR (82 aa)).

Interacts (via N-terminus) with apr-1 (via C-terminus). Interacts with bar-1 (via ARM repeats), gsk-3, and mig-5. As to expression, expressed in hypodermal cells (seam cells) V5 and V6, Q neuroblasts, ventral hypodermal cells P7/8 to P11/12, body wall muscle cells and neurons in the head, the tail and the ventral nerve cord.

It is found in the cell membrane. It localises to the nucleus. The protein localises to the cytoplasm. Its subcellular location is the cell cortex. In terms of biological role, works in parallel with axl-1 in negatively regulating bar-1 signaling in vulval precursor cells and Q neuroblasts. Inhibits Wnt signaling, which affects tissue specific expression of Hox genes, egl-5, lin-39 and mab-5. This in turn affects QR (postembryonic neuroblast) cell migration, vulval cell fate specification, and the development of sensory structures by the seam cell lineage. Has a role in alae V cell patterning, ray formation in the male tail and axon guidance. Does not affect B cell polarity. This Caenorhabditis elegans protein is Axin-like protein pry-1.